The following is a 126-amino-acid chain: Large ribosomal subunit protein bL20 (126 aa).

It belongs to the bacterial ribosomal protein bL20 family.

Binds directly to 23S ribosomal RNA and is necessary for the in vitro assembly process of the 50S ribosomal subunit. It is not involved in the protein synthesizing functions of that subunit. The chain is Large ribosomal subunit protein bL20 from Parafrankia sp. (strain EAN1pec).